The sequence spans 332 residues: UDP-N-acetylenolpyruvoylglucosamine reductase (332 aa).

The 199-residue stretch at Arg-45 to Leu-243 folds into the FAD-binding PCMH-type domain. Arg-194 is a catalytic residue. Catalysis depends on Ser-250, which acts as the Proton donor. Glu-320 is a catalytic residue.

The protein belongs to the MurB family. The cofactor is FAD.

It localises to the cytoplasm. The catalysed reaction is UDP-N-acetyl-alpha-D-muramate + NADP(+) = UDP-N-acetyl-3-O-(1-carboxyvinyl)-alpha-D-glucosamine + NADPH + H(+). Its pathway is cell wall biogenesis; peptidoglycan biosynthesis. Functionally, cell wall formation. This is UDP-N-acetylenolpyruvoylglucosamine reductase from Nitrosomonas eutropha (strain DSM 101675 / C91 / Nm57).